The sequence spans 359 residues: Membrane-bound lytic murein transglycosylase C (359 aa).

Residues 1-16 (MKKYLALALIAPLLIS) form the signal peptide. Cysteine 17 carries the N-palmitoyl cysteine lipid modification. The S-diacylglycerol cysteine moiety is linked to residue cysteine 17.

The protein belongs to the transglycosylase Slt family.

The protein localises to the cell outer membrane. It catalyses the reaction Exolytic cleavage of the (1-&gt;4)-beta-glycosidic linkage between N-acetylmuramic acid (MurNAc) and N-acetylglucosamine (GlcNAc) residues in peptidoglycan, from either the reducing or the non-reducing ends of the peptidoglycan chains, with concomitant formation of a 1,6-anhydrobond in the MurNAc residue.. Its function is as follows. Murein-degrading enzyme. May play a role in recycling of muropeptides during cell elongation and/or cell division. In Shigella dysenteriae serotype 1 (strain Sd197), this protein is Membrane-bound lytic murein transglycosylase C.